Consider the following 318-residue polypeptide: Putative 2-hydroxyacid dehydrogenase SSP0606 (318 aa).

Residues 156–157 (EI), 235–237 (ASR), and aspartate 261 contribute to the NAD(+) site. Residue arginine 237 is part of the active site. Glutamate 266 is a catalytic residue. Residue histidine 284 is the Proton donor of the active site. Residue 284 to 287 (HIGN) participates in NAD(+) binding.

This sequence belongs to the D-isomer specific 2-hydroxyacid dehydrogenase family.

The protein is Putative 2-hydroxyacid dehydrogenase SSP0606 of Staphylococcus saprophyticus subsp. saprophyticus (strain ATCC 15305 / DSM 20229 / NCIMB 8711 / NCTC 7292 / S-41).